A 313-amino-acid chain; its full sequence is MDGGNQSEGSEFLLLGMSESPEQQRILFWMFLSMYLVTVLGNVLIILAISSDSRLHTPMYFFLANLSFTDLFFVTNTIPKMLVNLQSQDKAISYAGCLTQLYFLLSLVTLDNLILAVMAYDRYVAICCPLHYVTAMSPRLCILLLSLCWVFSVLYGLIHTLLMTRVTFCGSRKIHYLFCEMYFLLRLACSNIQINHTVLXATGCFIFLIPLGFMIXSYARIVRAILRIPSATGKYKAFSTCASHLAVVSLFYGTLGMVYLQPLQTYSTKDSVATVMYAVVTPMMNPFIYSLRNKDIHGALGRLLQGKAFQKLT.

Residues 1-25 (MDGGNQSEGSEFLLLGMSESPEQQR) lie on the Extracellular side of the membrane. Residue Asn5 is glycosylated (N-linked (GlcNAc...) asparagine). The chain crosses the membrane as a helical span at residues 26–49 (ILFWMFLSMYLVTVLGNVLIILAI). Residues 50-57 (SSDSRLHT) are Cytoplasmic-facing. The helical transmembrane segment at 58 to 79 (PMYFFLANLSFTDLFFVTNTIP) threads the bilayer. At 80-100 (KMLVNLQSQDKAISYAGCLTQ) the chain is on the extracellular side. The cysteines at positions 97 and 189 are disulfide-linked. The chain crosses the membrane as a helical span at residues 101-120 (LYFLLSLVTLDNLILAVMAY). At 121 to 139 (DRYVAICCPLHYVTAMSPR) the chain is on the cytoplasmic side. Residues 140-158 (LCILLLSLCWVFSVLYGLI) traverse the membrane as a helical segment. The Extracellular portion of the chain corresponds to 159–196 (HTLLMTRVTFCGSRKIHYLFCEMYFLLRLACSNIQINH). N-linked (GlcNAc...) asparagine glycosylation is present at Asn195. Residues 197–219 (TVLXATGCFIFLIPLGFMIXSYA) form a helical membrane-spanning segment. Topologically, residues 220-236 (RIVRAILRIPSATGKYK) are cytoplasmic. A helical transmembrane segment spans residues 237-259 (AFSTCASHLAVVSLFYGTLGMVY). Topologically, residues 260 to 271 (LQPLQTYSTKDS) are extracellular. Residues 272–291 (VATVMYAVVTPMMNPFIYSL) form a helical membrane-spanning segment. The Cytoplasmic portion of the chain corresponds to 292–313 (RNKDIHGALGRLLQGKAFQKLT).

Belongs to the G-protein coupled receptor 1 family.

It is found in the cell membrane. In terms of biological role, odorant receptor. The chain is Olfactory receptor 1D2 (OR1D2) from Pongo pygmaeus (Bornean orangutan).